A 55-amino-acid polypeptide reads, in one-letter code: Conotoxin Cal14.14 (55 aa).

The first 20 residues, 1–20 (MFRLGVFLLTFLLLVSMATS), serve as a signal peptide directing secretion. Intrachain disulfides connect Cys-34/Cys-48 and Cys-38/Cys-52.

In terms of tissue distribution, expressed by the venom duct.

It is found in the secreted. Its function is as follows. Probable neurotoxin. The protein is Conotoxin Cal14.14 of Californiconus californicus (California cone).